An 85-amino-acid chain; its full sequence is Cell division topological specificity factor (85 aa).

Belongs to the MinE family.

In terms of biological role, prevents the cell division inhibition by proteins MinC and MinD at internal division sites while permitting inhibition at polar sites. This ensures cell division at the proper site by restricting the formation of a division septum at the midpoint of the long axis of the cell. This chain is Cell division topological specificity factor, found in Xanthomonas campestris pv. campestris (strain 8004).